A 303-amino-acid polypeptide reads, in one-letter code: Probable meiosis-specific protein SPO11 homolog (303 aa).

The region spanning 1-96 is the Topo IIA-type catalytic domain; the sequence is MALAPTSSAI…LGVRNTLKGI (96 aa). Y57 acts as the O-(5'-phospho-DNA)-tyrosine intermediate in catalysis. 2 residues coordinate Mg(2+): E144 and D196.

This sequence belongs to the TOP6A family. The cofactor is Mg(2+).

The protein localises to the nucleus. The enzyme catalyses ATP-dependent breakage, passage and rejoining of double-stranded DNA.. Required for meiotic recombination. Mediates DNA cleavage that forms the double-strand breaks (DSB) that initiate meiotic recombination. This chain is Probable meiosis-specific protein SPO11 homolog (SPO11), found in Encephalitozoon cuniculi (strain GB-M1) (Microsporidian parasite).